A 214-amino-acid chain; its full sequence is Membrane antigen containing repeating peptides (214 aa).

A run of 4 repeats spans residues 1-14, 15-28, 29-42, and 43-56. Positions 1-31 are disordered; the sequence is QETSAKLADTEETLQETSAKLADTEETLQET. A 4 X 14 AA tandem repeats region spans residues 1-56; it reads QETSAKLADTEETLQETSAKLADTEETLQETSAKLADTEETLQETSAKLADTEETL. The interval 180-214 is disordered; the sequence is CSLHPTPRRLGDVSNRENSIENKTRSASRLSGRLF. The span at 188–203 shows a compositional bias: basic and acidic residues; that stretch reads RLGDVSNRENSIENKT.

The protein resides in the membrane. The polypeptide is Membrane antigen containing repeating peptides (Leishmania major).